We begin with the raw amino-acid sequence, 266 residues long: Type II iodothyronine deiodinase (266 aa).

The Lumenal segment spans residues 1–9; that stretch reads MGLLSVDLL. Residues 10–34 traverse the membrane as a helical; Signal-anchor for type III membrane protein segment; the sequence is ITLQILPVFFSNCLFLALYDSVILL. Topologically, residues 35-266 are cytoplasmic; that stretch reads KHVALLLSRS…KNFSKRUILD (232 aa). Residue Sec130 is part of the active site. Residues Sec130 and Sec263 are each a non-standard amino acid (selenocysteine).

This sequence belongs to the iodothyronine deiodinase family. In terms of assembly, predominantly monomer. Can form homodimers but homodimerization is not essential for enzyme activity. Interacts with USP20 and USP33. Interacts with MARCHF6. Ubiquitinated by MARCHF6, leading to its degradation by the proteasome. Deubiquitinated by USP20 and USP33. In terms of tissue distribution, expressed in mammary gland and in brain.

It localises to the endoplasmic reticulum membrane. It catalyses the reaction 3,3',5-triiodo-L-thyronine + iodide + A + H(+) = L-thyroxine + AH2. The catalysed reaction is 3,3'-diiodo-L-thyronine + iodide + A + H(+) = 3,3',5'-triiodo-L-thyronine + AH2. The enzyme catalyses 3'-iodo-L-thyronine + iodide + A + H(+) = 3',5'-diiodo-L-thyronine + AH2. It carries out the reaction 3,3'-diiodothyronamine + iodide + A + H(+) = 3,3',5'-triiodothyronamine + AH2. It catalyses the reaction 3'-iodothyronamine + iodide + A + H(+) = 3',5'-diiodothyronamine + AH2. Functionally, plays a crucial role in the metabolism of thyroid hormones (TH) and has specific roles in TH activation and inactivation by deiodination. Catalyzes the deiodination of L-thyroxine (T4) to 3,5,3'-triiodothyronine (T3) and 3,3',5'-triiodothyronine (rT3) to 3,3'-diiodothyronine (3,3'-T2) via outer-ring deiodination (ORD). Catalyzes the deiodination of 3',5'-diiodothyronine (3',5'-T2) to 3'-monoiodothyronine (3'-T1) via ORD. Catalyzes the phenolic ring deiodinations of 3,3',5'-triiodothyronamine and 3',5'- diiodothyronamine. The polypeptide is Type II iodothyronine deiodinase (Dio2) (Mus musculus (Mouse)).